The primary structure comprises 361 residues: Cytosolic Fe-S cluster assembly factor CFD1 (361 aa).

An ATP-binding site is contributed by G37 to S44. 2 residues coordinate [4Fe-4S] cluster: C218 and C221. Residues H293–G314 form a disordered region.

It belongs to the Mrp/NBP35 ATP-binding proteins family. NUBP2/CFD1 subfamily. In terms of assembly, heterotetramer of 2 NBP35 and 2 CFD1 chains. It depends on [4Fe-4S] cluster as a cofactor.

It localises to the cytoplasm. Functionally, component of the cytosolic iron-sulfur (Fe/S) protein assembly (CIA) machinery. Required for maturation of extramitochondrial Fe-S proteins. The NBP35-CFD1 heterotetramer forms a Fe-S scaffold complex, mediating the de novo assembly of an Fe-S cluster and its transfer to target apoproteins. The chain is Cytosolic Fe-S cluster assembly factor CFD1 from Mycosarcoma maydis (Corn smut fungus).